The following is a 335-amino-acid chain: Leucine-rich repeat-containing protein 39 (335 aa).

Positions 10–47 (AVNAVKEVWEKRIKKLNEDLKREKEFQHKLVRIWEERV) form a coiled coil. LRR repeat units lie at residues 84-105 (QLQE…IGRF), 107-128 (NLIV…IGLL), 130-151 (RLQE…LSNC), 153-176 (SLEK…SNLL), 177-197 (KLTH…AVLN), 200-221 (ALEW…IERM), 223-244 (NLHT…ISNM), 246-267 (NLGT…MEEM), and 269-290 (NLRF…PPSE).

As to quaternary structure, interacts with MYH7 (via C-terminus). In terms of tissue distribution, highly expressed in skeletal muscle and heart. Not detected in other tissues tested.

Its subcellular location is the cytoplasm. The protein resides in the myofibril. The protein localises to the sarcomere. It is found in the m line. Functionally, component of the sarcomeric M-band which plays a role in myocyte response to biomechanical stress. May regulate expression of other M-band proteins via an SRF-dependent pathway. Important for normal contractile function in heart. This is Leucine-rich repeat-containing protein 39 (LRRC39) from Homo sapiens (Human).